A 341-amino-acid polypeptide reads, in one-letter code: MGELMAFLLPLIIVLMVKHSDSRTHSLRYFRLGVSDPIHGVPEFISVGYVDSHPITTYDSVTRQKEPRAPWMAENLAPDHWERYTQLLRGWQQMFKVELKRLQRHYNHSGSHTYQRMIGCELLEDGSTTGFLQYAYDGQDFLIFNKDTLSWLAVDNVAHTIKQAWEANQHELLYQKNWLEEECIAWLKRFLEYGKDTLQRTEPPLVRVNRKETFPGVTALFCKAHGFYPPEIYMTWMKNGEEIVQEIDYGDILPSGDGTYQAWASIELDPQSSNLYSCHVEHCGVHMVLQVPQESETIPLVMKAVSGSIVLVIVLAGVGVLVWRRRPREQNGAIYLPTPDR.

An N-terminal signal peptide occupies residues 1–22; the sequence is MGELMAFLLPLIIVLMVKHSDS. The segment at 23 to 109 is alpha-1; that stretch reads RTHSLRYFRL…KRLQRHYNHS (87 aa). The segment at 23–201 is antigen-binding cleft; the sequence is RTHSLRYFRL…EYGKDTLQRT (179 aa). Residues 23 to 302 lie on the Extracellular side of the membrane; the sequence is RTHSLRYFRL…QESETIPLVM (280 aa). Positions 31, 46, and 65 each coordinate 5-(2-oxoethylideneamino)-6-(D-ribitylamino)uracil. 5-(2-oxopropylideneamino)-6-(D-ribitylamino)uracil contacts are provided by R31, S46, and K65. 7-hydroxy-6-methyl-8-(1-D-ribityl)lumazine is bound by residues R31, S46, and K65. R31 provides a ligand contact to 8-(9H-purin-6-yl)-2-oxa-8-azabicyclo[3.3.1]nona-3,6-diene-4,6-dicarbaldehyde. 8-(9H-purin-6-yl)-2-oxa-8-azabicyclo[3.3.1]nona-3,6-diene-4,6-dicarbaldehyde-binding residues include K65 and H80. Position 65 (K65) interacts with 2-amino-4-oxopteridine-6-carbaldehyde. Pyridoxal is bound at residue K65. N107 carries an N-linked (GlcNAc...) asparagine glycan. Residues 110-201 form an alpha-2 region; sequence GSHTYQRMIG…EYGKDTLQRT (92 aa). Residues R116, Y174, and Q175 each contribute to the 5-(2-oxoethylideneamino)-6-(D-ribitylamino)uracil site. 3 residues coordinate 5-(2-oxopropylideneamino)-6-(D-ribitylamino)uracil: R116, Y174, and Q175. Positions 116, 174, and 175 each coordinate 7-hydroxy-6-methyl-8-(1-D-ribityl)lumazine. R116 serves as a coordination point for 8-(9H-purin-6-yl)-2-oxa-8-azabicyclo[3.3.1]nona-3,6-diene-4,6-dicarbaldehyde. 2 cysteine pairs are disulfide-bonded: C120–C183 and C222–C278. The segment at 202-293 is alpha-3; the sequence is EPPLVRVNRK…GVHMVLQVPQ (92 aa). One can recognise an Ig-like C1-type domain in the interval 203-299; sequence PPLVRVNRKE…QVPQESETIP (97 aa). The tract at residues 294 to 302 is connecting peptide; sequence ESETIPLVM. Residues 303-323 form a helical membrane-spanning segment; sequence KAVSGSIVLVIVLAGVGVLVW. Residues 324 to 341 lie on the Cytoplasmic side of the membrane; it reads RRRPREQNGAIYLPTPDR.

It belongs to the MHC class I family. In terms of assembly, heterotrimer that consists of MR1, B2M and a metabolite antigen. Major classes of metabolite ligands presented by MR1 include riboflavin-related antigens, pyrimidines and ribityl lumazines, nucleobase adducts and folate derivatives. Forms reversible covalent Schiff base complexes with microbial pyrimidine-based metabolite, which serves as a molecular switch triggering complete folding, stable association with B2M and translocation of the ternary complex from endoplasmic reticulum to the plasma membrane. Alternatively, forms non-Schiff base complexes with ribityl lumazines. On antigen-presenting cells, the ternary complex interacts with TCR on MR1-restricted T cells, predominantly represented by CD8-positive and CD4- and CD8-double negative MAIT cell subsets. Interacts with TAPBP and TAPBPL chaperones in the endoplasmic reticulum. TAPBP associated or not with MHC class I peptide loading complex binds ligand-free MR1 or MR1-B2M complex, providing for stable MR1 pools ready for metabolite antigen processing. TAPBPL interacts with MR1 in a ligand-independent way; this interaction may stabilize MR1 pool and facilitate ligand loading and dissociation. MR1-B2M heterodimer adopts a topology similar to classical MHC class I molecules, with alpha-1 and alpha-2 domains of MR1 forming the antigen-binding cleft composed of two alpha-helices resting on a floor of 7-stranded anti-parallel beta-pleated sheet. The ribityl moiety of pyrimidine-based antigens is recognized by Tyr-95 residue in the CDR3 alpha loop of the invariant TRAV1-2 TCR. Homodimerizes and does not associate with B2M. Post-translationally, N-glycosylated. Ubiquitous. Low expression is detected in peripheral blood B cells, T cells, monocytes and in bronchial epithelial cells (at protein level). Expressed in plasmablasts or plasma B cells in the lamina propria of ileum, appendix and colon (at protein level). Highly expressed on a subset of CD45-positive CD3-positive thymocytes (at protein level).

The protein resides in the cell membrane. The protein localises to the endoplasmic reticulum membrane. Its subcellular location is the golgi apparatus membrane. It localises to the early endosome membrane. It is found in the late endosome membrane. The protein resides in the secreted. Its activity is regulated as follows. Inhibited by pterin-based metabolites such as 6-formylpterin (6-FP, a product of folic acid photodegradation). 6-FP competitively inhibits MAIT cell activation by 5-OP-RU. Modulated by commonly prescribed anti-inflammatory drug metabolites. Inhibited by salicilates such as 3-formylsalicylic and 5-formylsalicylic acids. Activated by diclofenac and/or its hydroxy metabolites. Its function is as follows. Antigen-presenting molecule specialized in displaying microbial pyrimidine-based metabolites to alpha-beta T cell receptors (TCR) on innate-type mucosal-associated invariant T (MAIT) cells. In complex with B2M preferentially presents riboflavin-derived metabolites to semi-invariant TRAV1.2 TCRs on MAIT cells, guiding immune surveillance of the microbial metabolome at mucosal epithelial barriers. Signature pyrimidine-based microbial antigens are generated via non-enzymatic condensation of metabolite intermediates of the riboflavin pathway with by-products arising from other metabolic pathways such as glycolysis. Typical potent antigenic metabolites are 5-(2-oxoethylideneamino)-6-D-ribitylaminouracil (5-OE-RU) and 5-(2-oxopropylideneamino)-6-D-ribitylaminouracil (5-OP-RU), products of condensation of 5-amino-6-D-ribityaminouracil (5-A-RU) with glyoxal or methylglyoxal by-products, respectively. May present microbial antigens to various TRAV1-2-negative MAIT cell subsets, providing for unique recognition of diverse microbes, including pathogens that do not synthesize riboflavin. Upon antigen recognition, elicits rapid innate-type MAIT cell activation to eliminate pathogenic microbes by directly killing infected cells. During T cell development, drives thymic selection and post-thymic terminal differentiation of MAIT cells in a process dependent on commensal microflora. Acts as an immune sensor of cancer cell metabolome. May present a tumor-specific or -associated metabolite essential for cancer cell survival to a 'pan-cancer' TCR consisting of TRAV38.2-DV8*TRAJ31 alpha chain paired with a TRBV25.1*TRBJ2.3 beta chain on a non-MAIT CD8-positive T cell clone (MC.7.G5), triggering T cell-mediated killing of a wide range of cancer cell types. In terms of biological role, allele MR1*01: Presents microbial-derived metabolite 5-OP-RU to semi-invariant TRAV1.2-TRAJ33-TRBV6.1 (A-F7) TCR on MAIT cells. Presents nucleobase carbonyl adducts generated during oxidative stress. Captures M3Ade, a nucleobase adduct composed of one adenine modified by a malondialdehyde trimer, for recognition by MR1-restricted T cell clones expressing a polyclonal TCR repertoire. Displays moderate binding affinity toward tumor-enriched pyridoxal and pyridoxal 5'-phosphate antigens. Allele MR1*04: Presents tumor-enriched metabolite pyridoxal to pan-cancer 7.G5 TCR on T cells enabling preferential recognition of cancer cells. May act as an alloantigen. This is Major histocompatibility complex class I-related protein 1 from Homo sapiens (Human).